Consider the following 134-residue polypeptide: D-ribose pyranase (134 aa).

His20 functions as the Proton donor in the catalytic mechanism. Substrate is bound by residues Asp28, His101, and 123–125; that span reads YSN.

Belongs to the RbsD / FucU family. RbsD subfamily. In terms of assembly, homodecamer.

It is found in the cytoplasm. It carries out the reaction beta-D-ribopyranose = beta-D-ribofuranose. Its pathway is carbohydrate metabolism; D-ribose degradation; D-ribose 5-phosphate from beta-D-ribopyranose: step 1/2. In terms of biological role, catalyzes the interconversion of beta-pyran and beta-furan forms of D-ribose. This Pseudomonas syringae pv. tomato (strain ATCC BAA-871 / DC3000) protein is D-ribose pyranase.